Here is a 779-residue protein sequence, read N- to C-terminus: Ribonucleoside-diphosphate reductase large subunit (779 aa).

Substrate-binding positions include serine 178, 193 to 194, glycine 222, 420 to 424, and 614 to 618; these read SC, NLCIE, and PTATS. The cysteines at positions 194 and 440 are disulfide-linked. Catalysis depends on asparagine 420, which acts as the Proton acceptor. Cysteine 422 serves as the catalytic Cysteine radical intermediate. The active-site Proton acceptor is the glutamate 424.

Belongs to the ribonucleoside diphosphate reductase large chain family. In terms of assembly, heterotetramer composed of a homodimer of the large subunit (R1) and a homodimer of the small subunit (R2). Larger multisubunit protein complex are also active, composed of (R1)n(R2)n.

The catalysed reaction is a 2'-deoxyribonucleoside 5'-diphosphate + [thioredoxin]-disulfide + H2O = a ribonucleoside 5'-diphosphate + [thioredoxin]-dithiol. With respect to regulation, under complex allosteric control mediated by deoxynucleoside triphosphates and ATP binding. The type of nucleotide bound at the specificity site determines substrate preference. It seems probable that ATP makes the enzyme reduce CDP and UDP, dGTP favors ADP reduction and dTTP favors GDP reduction. Its function is as follows. Ribonucleoside-diphosphate reductase holoenzyme provides the precursors necessary for viral DNA synthesis. Allows virus growth in non-dividing cells. Catalyzes the biosynthesis of deoxyribonucleotides from the corresponding ribonucleotides. The chain is Ribonucleoside-diphosphate reductase large subunit from Ornithodoros (relapsing fever ticks).